The sequence spans 480 residues: Cobyric acid synthase (480 aa).

The GATase cobBQ-type domain occupies lysine 246–glutamine 434. Catalysis depends on cysteine 328, which acts as the Nucleophile. Histidine 426 is a catalytic residue.

The protein belongs to the CobB/CobQ family. CobQ subfamily.

It participates in cofactor biosynthesis; adenosylcobalamin biosynthesis. Catalyzes amidations at positions B, D, E, and G on adenosylcobyrinic A,C-diamide. NH(2) groups are provided by glutamine, and one molecule of ATP is hydrogenolyzed for each amidation. In Methylocella silvestris (strain DSM 15510 / CIP 108128 / LMG 27833 / NCIMB 13906 / BL2), this protein is Cobyric acid synthase.